Reading from the N-terminus, the 237-residue chain is Concanavalin-A (237 aa).

Mn(2+) is bound by residues E8 and D10. Ca(2+) is bound by residues D10, Y12, N14, and D19. Position 14 (N14) interacts with a carbohydrate. Mn(2+)-binding residues include D19 and H24. Residues 98–100 (GLY), D208, and R228 contribute to the a carbohydrate site.

This sequence belongs to the leguminous lectin family. As to quaternary structure, homotetramer. In terms of processing, concanavalin A-like lectins of the Diocleinae subtribe undergo proteolytic processing referred to as circular permutation. The propeptide is split into an N-terminal and a C-terminal part, the gamma and beta chain, respectively. These are then religated in beta-gamma order to form the mature alpha chain. The beta and gamma chains can often be detected in cell extracts. Residues 1-118 of the mature chain, as displayed here, probably constitute the beta chain in the propeptide, residues 119-237 the gamma chain.

In terms of biological role, glucose/D-mannose specific lectin. This Canavalia cathartica (Jackbean) protein is Concanavalin-A.